We begin with the raw amino-acid sequence, 145 residues long: Large ribosomal subunit protein uL15 (145 aa).

The segment at 1–58 (MFSLLKPKGAAKRRKIVGRGPGSGLGKTSGRGQKGQKARNTSPRLGFEGGQTPLYRRL) is disordered. A compositionally biased stretch (gly residues) spans 19-33 (RGPGSGLGKTSGRGQ).

The protein belongs to the universal ribosomal protein uL15 family. As to quaternary structure, part of the 50S ribosomal subunit.

Binds to the 23S rRNA. The chain is Large ribosomal subunit protein uL15 from Borreliella afzelii (strain PKo) (Borrelia afzelii).